We begin with the raw amino-acid sequence, 339 residues long: D-alanine--D-alanine ligase (339 aa).

In terms of domain architecture, ATP-grasp spans 126 to 333 (KQVLDSAGIP…YSELVTRLVE (208 aa)). 158–213 (AAELGYPLFVKPANLGSSVGISKVGSPEELDAALTLAFGLDRRVILEAMTPHKPRE) provides a ligand contact to ATP. Mg(2+)-binding residues include aspartate 286, glutamate 300, and asparagine 302.

It belongs to the D-alanine--D-alanine ligase family. The cofactor is Mg(2+). Mn(2+) serves as cofactor.

It localises to the cytoplasm. It carries out the reaction 2 D-alanine + ATP = D-alanyl-D-alanine + ADP + phosphate + H(+). Its pathway is cell wall biogenesis; peptidoglycan biosynthesis. In terms of biological role, cell wall formation. The protein is D-alanine--D-alanine ligase of Deinococcus radiodurans (strain ATCC 13939 / DSM 20539 / JCM 16871 / CCUG 27074 / LMG 4051 / NBRC 15346 / NCIMB 9279 / VKM B-1422 / R1).